A 429-amino-acid chain; its full sequence is 3-phosphoshikimate 1-carboxyvinyltransferase (429 aa).

Residues K23, S24, and R28 each contribute to the 3-phosphoshikimate site. Residue K23 coordinates phosphoenolpyruvate. Phosphoenolpyruvate contacts are provided by G95 and R123. 4 residues coordinate 3-phosphoshikimate: S168, Q170, D316, and K343. Residue Q170 coordinates phosphoenolpyruvate. The Proton acceptor role is filled by D316. 2 residues coordinate phosphoenolpyruvate: R347 and R389.

This sequence belongs to the EPSP synthase family. Monomer.

Its subcellular location is the cytoplasm. It catalyses the reaction 3-phosphoshikimate + phosphoenolpyruvate = 5-O-(1-carboxyvinyl)-3-phosphoshikimate + phosphate. Its pathway is metabolic intermediate biosynthesis; chorismate biosynthesis; chorismate from D-erythrose 4-phosphate and phosphoenolpyruvate: step 6/7. In terms of biological role, catalyzes the transfer of the enolpyruvyl moiety of phosphoenolpyruvate (PEP) to the 5-hydroxyl of shikimate-3-phosphate (S3P) to produce enolpyruvyl shikimate-3-phosphate and inorganic phosphate. This is 3-phosphoshikimate 1-carboxyvinyltransferase from Bacillus thuringiensis subsp. konkukian (strain 97-27).